The primary structure comprises 161 residues: UPF0178 protein BOV_1904 (161 aa).

Belongs to the UPF0178 family.

This is UPF0178 protein BOV_1904 from Brucella ovis (strain ATCC 25840 / 63/290 / NCTC 10512).